The sequence spans 338 residues: Aspartate carbamoyltransferase catalytic subunit (338 aa).

Carbamoyl phosphate is bound by residues R59 and T60. Residue K87 coordinates L-aspartate. Carbamoyl phosphate is bound by residues R109, H142, and Q145. Residues R182 and R248 each contribute to the L-aspartate site. Carbamoyl phosphate-binding residues include G289 and P290.

It belongs to the aspartate/ornithine carbamoyltransferase superfamily. ATCase family. As to quaternary structure, heterododecamer (2C3:3R2) of six catalytic PyrB chains organized as two trimers (C3), and six regulatory PyrI chains organized as three dimers (R2).

The enzyme catalyses carbamoyl phosphate + L-aspartate = N-carbamoyl-L-aspartate + phosphate + H(+). It functions in the pathway pyrimidine metabolism; UMP biosynthesis via de novo pathway; (S)-dihydroorotate from bicarbonate: step 2/3. Functionally, catalyzes the condensation of carbamoyl phosphate and aspartate to form carbamoyl aspartate and inorganic phosphate, the committed step in the de novo pyrimidine nucleotide biosynthesis pathway. The chain is Aspartate carbamoyltransferase catalytic subunit from Synechococcus elongatus (strain ATCC 33912 / PCC 7942 / FACHB-805) (Anacystis nidulans R2).